The chain runs to 364 residues: UDP-N-acetylglucosamine--N-acetylmuramyl-(pentapeptide) pyrophosphoryl-undecaprenol N-acetylglucosamine transferase (364 aa).

UDP-N-acetyl-alpha-D-glucosamine is bound by residues threonine 13 to glycine 15, asparagine 125, arginine 165, serine 192, and glutamine 293.

This sequence belongs to the glycosyltransferase 28 family. MurG subfamily.

It is found in the cell inner membrane. It catalyses the reaction di-trans,octa-cis-undecaprenyl diphospho-N-acetyl-alpha-D-muramoyl-L-alanyl-D-glutamyl-meso-2,6-diaminopimeloyl-D-alanyl-D-alanine + UDP-N-acetyl-alpha-D-glucosamine = di-trans,octa-cis-undecaprenyl diphospho-[N-acetyl-alpha-D-glucosaminyl-(1-&gt;4)]-N-acetyl-alpha-D-muramoyl-L-alanyl-D-glutamyl-meso-2,6-diaminopimeloyl-D-alanyl-D-alanine + UDP + H(+). The protein operates within cell wall biogenesis; peptidoglycan biosynthesis. Its function is as follows. Cell wall formation. Catalyzes the transfer of a GlcNAc subunit on undecaprenyl-pyrophosphoryl-MurNAc-pentapeptide (lipid intermediate I) to form undecaprenyl-pyrophosphoryl-MurNAc-(pentapeptide)GlcNAc (lipid intermediate II). In Cereibacter sphaeroides (strain ATCC 17029 / ATH 2.4.9) (Rhodobacter sphaeroides), this protein is UDP-N-acetylglucosamine--N-acetylmuramyl-(pentapeptide) pyrophosphoryl-undecaprenol N-acetylglucosamine transferase.